The primary structure comprises 221 residues: Transcription factor otaR1 (221 aa).

Residues 109 to 146 form a disordered region; sequence ASRSRPAFSTPASRPGLSSAKSPSLGATSPGSMDRSEE. Polar residues predominate over residues 127-139; it reads SAKSPSLGATSPG. The segment at 152–192 is basic motif; the sequence is KKYHEKYKERNRLAAGRSRQKQADLINLLQAEQQEEERRRK. The 64-residue stretch at 152–215 folds into the bZIP domain; the sequence is KKYHEKYKER…VDMKQELQHH (64 aa). Residues 198 to 212 form a leucine-zipper region; the sequence is IANMQKELVDMKQEL.

Its subcellular location is the nucleus. Transcription factor; part of the gene cluster that mediates the biosynthesis of ochratoxin A (OTA), a mycotoxin demonstrated to have nephrotoxic, immunotoxic, genotoxic, neurotoxic, and teratogenic properties. Positively regulates the expression of the OTA biosynthetic genes and subsequent production of OTA. Probably binds to conserved 5'-ACGT-3' bZIP binding motifs found in multiple copies (3 to 4) in the promoters of the OTA biosynthetic genes. Acts not only as a pathway-specific regulator of the OTA cluster but also binds at other chromosomal positions outside the OTA cluster and can act as a broad regulator. Negatively regulates pathogenicity and plays a critical role in tolerance to reactive oxygen species (ROS). The protein is Transcription factor otaR1 of Aspergillus niger (strain ATCC MYA-4892 / CBS 513.88 / FGSC A1513).